A 257-amino-acid polypeptide reads, in one-letter code: 1-(5-phosphoribosyl)-5-[(5-phosphoribosylamino)methylideneamino] imidazole-4-carboxamide isomerase (257 aa).

The active-site Proton acceptor is the Asp-8. Asp-129 (proton donor) is an active-site residue.

Belongs to the HisA/HisF family.

The protein resides in the cytoplasm. The catalysed reaction is 1-(5-phospho-beta-D-ribosyl)-5-[(5-phospho-beta-D-ribosylamino)methylideneamino]imidazole-4-carboxamide = 5-[(5-phospho-1-deoxy-D-ribulos-1-ylimino)methylamino]-1-(5-phospho-beta-D-ribosyl)imidazole-4-carboxamide. It participates in amino-acid biosynthesis; L-histidine biosynthesis; L-histidine from 5-phospho-alpha-D-ribose 1-diphosphate: step 4/9. The sequence is that of 1-(5-phosphoribosyl)-5-[(5-phosphoribosylamino)methylideneamino] imidazole-4-carboxamide isomerase from Cyanothece sp. (strain PCC 7425 / ATCC 29141).